The sequence spans 706 residues: Axin-related protein (706 aa).

The region spanning 72 to 191 (SLNLLLDDQD…LQSDICKEYA (120 aa)) is the RGS domain. 3 disordered regions span residues 278-298 (MTDG…REIH), 400-482 (TPAN…GTSA), and 585-605 (STTL…GFST). Polar residues predominate over residues 402–412 (ANLSPRSQSPF). Over residues 453–462 (RSSVSSQLPR) the composition is skewed to low complexity. The DIX domain occupies 624-706 (GQGLAIVYYF…KIICKVERAC (83 aa)).

In terms of assembly, interacts with dvl2/dsh via DIX domains in both proteins. Forms a complex with ctnnb1/beta-catenin and gsk3b. Also forms heterodimers with mouse Axin1.

It localises to the cytoplasm. The protein resides in the cytoplasmic vesicle. In terms of biological role, regulates the wnt signaling pathway by interacting with dvl2/dsh, which displaces gsk3b from the axnr-gsk3b complex and thus prevents degradation of ctnnb1/beta-catenin. In Xenopus laevis (African clawed frog), this protein is Axin-related protein.